The following is a 280-amino-acid chain: 4-diphosphocytidyl-2-C-methyl-D-erythritol kinase (280 aa).

Lys8 is a catalytic residue. 91-101 (PVSAGLAGGST) provides a ligand contact to ATP. Asp133 is a catalytic residue.

The protein belongs to the GHMP kinase family. IspE subfamily.

It catalyses the reaction 4-CDP-2-C-methyl-D-erythritol + ATP = 4-CDP-2-C-methyl-D-erythritol 2-phosphate + ADP + H(+). It functions in the pathway isoprenoid biosynthesis; isopentenyl diphosphate biosynthesis via DXP pathway; isopentenyl diphosphate from 1-deoxy-D-xylulose 5-phosphate: step 3/6. Functionally, catalyzes the phosphorylation of the position 2 hydroxy group of 4-diphosphocytidyl-2C-methyl-D-erythritol. The sequence is that of 4-diphosphocytidyl-2-C-methyl-D-erythritol kinase from Clostridium botulinum (strain Alaska E43 / Type E3).